The chain runs to 70 residues: Small ribosomal subunit protein bS21C (70 aa).

A disordered region spans residues 38-70 (YEKPTTERKRKKAAAVARLRKQVRRSMPPKKKY). The span at 45–70 (RKRKKAAAVARLRKQVRRSMPPKKKY) shows a compositional bias: basic residues.

It belongs to the bacterial ribosomal protein bS21 family.

In Burkholderia thailandensis (strain ATCC 700388 / DSM 13276 / CCUG 48851 / CIP 106301 / E264), this protein is Small ribosomal subunit protein bS21C.